We begin with the raw amino-acid sequence, 414 residues long: Apolipoprotein N-acyltransferase (414 aa).

A run of 6 helical transmembrane segments spans residues 19–39 (GIAL…HFGI), 40–60 (TSPL…LKLP), 63–83 (SGFA…ALSF), 91–111 (LIPF…SMAL), 121–141 (LLLW…VPEV), and 153–173 (LSFG…QRWL). Residues 202–414 (IETHIPQEIR…NRSPSGIIAP (213 aa)) enclose the CN hydrolase domain. Glutamate 243 acts as the Proton acceptor in catalysis. Residue lysine 298 is part of the active site. The Nucleophile role is filled by cysteine 351.

This sequence belongs to the CN hydrolase family. Apolipoprotein N-acyltransferase subfamily.

The protein localises to the cell inner membrane. The enzyme catalyses N-terminal S-1,2-diacyl-sn-glyceryl-L-cysteinyl-[lipoprotein] + a glycerophospholipid = N-acyl-S-1,2-diacyl-sn-glyceryl-L-cysteinyl-[lipoprotein] + a 2-acyl-sn-glycero-3-phospholipid + H(+). Its pathway is protein modification; lipoprotein biosynthesis (N-acyl transfer). Its function is as follows. Catalyzes the phospholipid dependent N-acylation of the N-terminal cysteine of apolipoprotein, the last step in lipoprotein maturation. This is Apolipoprotein N-acyltransferase from Wolinella succinogenes (strain ATCC 29543 / DSM 1740 / CCUG 13145 / JCM 31913 / LMG 7466 / NCTC 11488 / FDC 602W) (Vibrio succinogenes).